The sequence spans 858 residues: Bifunctional uridylyltransferase/uridylyl-removing enzyme (858 aa).

The tract at residues 1–324 is uridylyltransferase; the sequence is MSASVAEPPP…PATSGVTRVL (324 aa). The uridylyl-removing stretch occupies residues 325-681; it reads SPGRFVEKQG…ARPSPVGDAL (357 aa). The HD domain maps to 443 to 565; sequence VDQHILMVLR…VGSERRLTAL (123 aa). ACT domains are found at residues 682 to 761 and 790 to 858; these read QVLV…PEPS and ILSV…AIAV.

Belongs to the GlnD family. It depends on Mg(2+) as a cofactor.

It catalyses the reaction [protein-PII]-L-tyrosine + UTP = [protein-PII]-uridylyl-L-tyrosine + diphosphate. It carries out the reaction [protein-PII]-uridylyl-L-tyrosine + H2O = [protein-PII]-L-tyrosine + UMP + H(+). Uridylyltransferase (UTase) activity is inhibited by glutamine, while glutamine activates uridylyl-removing (UR) activity. Functionally, modifies, by uridylylation and deuridylylation, the PII regulatory proteins (GlnB and homologs), in response to the nitrogen status of the cell that GlnD senses through the glutamine level. Under low glutamine levels, catalyzes the conversion of the PII proteins and UTP to PII-UMP and PPi, while under higher glutamine levels, GlnD hydrolyzes PII-UMP to PII and UMP (deuridylylation). Thus, controls uridylylation state and activity of the PII proteins, and plays an important role in the regulation of nitrogen assimilation and metabolism. The protein is Bifunctional uridylyltransferase/uridylyl-removing enzyme of Burkholderia pseudomallei (strain 1106a).